A 319-amino-acid chain; its full sequence is HTH-type transcriptional regulator YidZ (319 aa).

One can recognise an HTH lysR-type domain in the interval 8-65 (LDLNLLLCLQLLMQERSVTKAAKRMNVTPSAVSKSLAKLRAWFDDPLFVNSPLGLSPT). The H-T-H motif DNA-binding region spans 25–44 (VTKAAKRMNVTPSAVSKSLA).

Belongs to the LysR transcriptional regulatory family.

Involved in anaerobic NO protection. The protein is HTH-type transcriptional regulator YidZ of Escherichia coli O157:H7 (strain EC4115 / EHEC).